Consider the following 141-residue polypeptide: Hemoglobin subunit alpha (141 aa).

A Globin domain is found at 1–141 (VLSAADKSNV…VSTVLTSKYR (141 aa)). Position 3 is a phosphoserine (S3). 2 positions are modified to N6-succinyllysine: K7 and K11. K16 is modified (N6-acetyllysine; alternate). K16 is subject to N6-succinyllysine; alternate. The residue at position 24 (Y24) is a Phosphotyrosine. At S35 the chain carries Phosphoserine. K40 is subject to N6-succinyllysine. Residue S49 is modified to Phosphoserine. Residue H58 coordinates O2. Heme b is bound at residue H87. At S102 the chain carries Phosphoserine. Position 108 is a phosphothreonine (T108). S124 carries the phosphoserine modification. 2 positions are modified to phosphothreonine: T134 and T137. S138 bears the Phosphoserine mark.

Belongs to the globin family. As to quaternary structure, heterotetramer of two alpha chains and two beta chains. Red blood cells.

In terms of biological role, involved in oxygen transport from the lung to the various peripheral tissues. Hemopressin acts as an antagonist peptide of the cannabinoid receptor CNR1. Hemopressin-binding efficiently blocks cannabinoid receptor CNR1 and subsequent signaling. The sequence is that of Hemoglobin subunit alpha (HBA) from Rangifer tarandus (Reindeer).